The chain runs to 372 residues: MAKIVVGLSGGVDSAVSAYLLKKAGHNVIAVFMRNWDSSLNNDFLGKKNEKNFTICPQEQDWLDAKVVAKQLNIPIFRIDFIKEYWDEVFSDLILKYQSGLTPNPDILCNKNIKFKHFLDYAQKVHNADFIAMGHYAKTDNGNLYAGADSLKDQSYFLGQLSKSQLQKTIFPLGNLHKSEVRKIANELGLINAKKKDSTGICFIGERKFTDFLQNYIPAQPGNIIDISTKKVLGKHIGIMYFTIGQRKGFGLSGMKEPYFVVGHNLKEKILYVSPQSEKKWLESDSLMAKNANFLSENFRNLDNLSAKFRYRQEAIPIKIEKIQDNSFWISYQKYQAITPGQQVVIYHQNQVILAGEIALLFRNGKKLDYLD.

ATP is bound by residues 7-14 and methionine 33; that span reads GLSGGVDS. The tract at residues 104–106 is interaction with target base in tRNA; that stretch reads NPD. Catalysis depends on cysteine 109, which acts as the Nucleophile. Cysteine 109 and cysteine 202 are joined by a disulfide. Glycine 134 contacts ATP. The tract at residues 152–154 is interaction with tRNA; that stretch reads KDQ. The active-site Cysteine persulfide intermediate is cysteine 202. Residues 310 to 311 form an interaction with tRNA region; it reads RY.

The protein belongs to the MnmA/TRMU family.

Its subcellular location is the cytoplasm. It carries out the reaction S-sulfanyl-L-cysteinyl-[protein] + uridine(34) in tRNA + AH2 + ATP = 2-thiouridine(34) in tRNA + L-cysteinyl-[protein] + A + AMP + diphosphate + H(+). Its function is as follows. Catalyzes the 2-thiolation of uridine at the wobble position (U34) of tRNA, leading to the formation of s(2)U34. In Mesomycoplasma hyopneumoniae (strain 232) (Mycoplasma hyopneumoniae), this protein is tRNA-specific 2-thiouridylase MnmA.